The primary structure comprises 294 residues: tRNA pseudouridine synthase A (294 aa).

The active-site Nucleophile is aspartate 64. Tyrosine 122 lines the substrate pocket.

Belongs to the tRNA pseudouridine synthase TruA family. In terms of assembly, homodimer.

It carries out the reaction uridine(38/39/40) in tRNA = pseudouridine(38/39/40) in tRNA. Formation of pseudouridine at positions 38, 39 and 40 in the anticodon stem and loop of transfer RNAs. The sequence is that of tRNA pseudouridine synthase A from Synechococcus sp. (strain ATCC 27144 / PCC 6301 / SAUG 1402/1) (Anacystis nidulans).